The chain runs to 375 residues: Succinyl-diaminopimelate desuccinylase (375 aa).

His-66 contacts Zn(2+). Asp-68 is an active-site residue. Asp-99 lines the Zn(2+) pocket. Glu-133 (proton acceptor) is an active-site residue. Positions 134, 162, and 348 each coordinate Zn(2+).

It belongs to the peptidase M20A family. DapE subfamily. Homodimer. Zn(2+) is required as a cofactor. It depends on Co(2+) as a cofactor.

It catalyses the reaction N-succinyl-(2S,6S)-2,6-diaminopimelate + H2O = (2S,6S)-2,6-diaminopimelate + succinate. The protein operates within amino-acid biosynthesis; L-lysine biosynthesis via DAP pathway; LL-2,6-diaminopimelate from (S)-tetrahydrodipicolinate (succinylase route): step 3/3. Catalyzes the hydrolysis of N-succinyl-L,L-diaminopimelic acid (SDAP), forming succinate and LL-2,6-diaminopimelate (DAP), an intermediate involved in the bacterial biosynthesis of lysine and meso-diaminopimelic acid, an essential component of bacterial cell walls. The chain is Succinyl-diaminopimelate desuccinylase from Salmonella typhi.